Consider the following 224-residue polypeptide: Probable octanoyltransferase (224 aa).

The 172-residue stretch at 28–199 folds into the BPL/LPL catalytic domain; it reads GLTGDIALVT…KLALELGLTP (172 aa). Residues 66-73, 130-132, and 143-145 contribute to the substrate site; these read RGGDATYH, SIG, and GVA. Cys161 serves as the catalytic Acyl-thioester intermediate.

It belongs to the LipB family.

It is found in the cytoplasm. It catalyses the reaction octanoyl-[ACP] + L-lysyl-[protein] = N(6)-octanoyl-L-lysyl-[protein] + holo-[ACP] + H(+). It functions in the pathway protein modification; protein lipoylation via endogenous pathway; protein N(6)-(lipoyl)lysine from octanoyl-[acyl-carrier-protein]: step 1/2. Functionally, catalyzes the transfer of endogenously produced octanoic acid from octanoyl-acyl-carrier-protein onto the lipoyl domains of lipoate-dependent enzymes. Lipoyl-ACP can also act as a substrate although octanoyl-ACP is likely to be the physiological substrate. This is Probable octanoyltransferase from Pyrobaculum aerophilum (strain ATCC 51768 / DSM 7523 / JCM 9630 / CIP 104966 / NBRC 100827 / IM2).